A 209-amino-acid polypeptide reads, in one-letter code: Mitochondrial import inner membrane translocase subunit Tim23 (209 aa).

Helical transmembrane passes span 73–93 (FELA…FGAV), 125–145 (ALWA…GVII), and 180–200 (GGLA…WEHI).

This sequence belongs to the Tim17/Tim22/Tim23 family. In terms of assembly, component of the TIM23 complex at least composed of timm23, timm17 and timm50. The complex interacts with the timm44 component of the PAM complex.

It is found in the mitochondrion inner membrane. Its function is as follows. Essential component of the TIM23 complex, a complex that mediates the translocation of transit peptide-containing proteins across the mitochondrial inner membrane. This chain is Mitochondrial import inner membrane translocase subunit Tim23 (timm23), found in Xenopus tropicalis (Western clawed frog).